The following is a 350-amino-acid chain: Methionine aminopeptidase 1D, chloroplastic/mitochondrial (350 aa).

A chloroplast and mitochondrion-targeting transit peptide spans 1-49 (MAGVKSLQPRLISSFLGNNSIRSTQPLIHLFRFDLGRRHVSMQLSRTFS). Gly-50 bears the N-acetylglycine mark. Residues 71 to 90 (RLRPGNVSPRRPVPGHITKP) form a disordered region. His-180 provides a ligand contact to substrate. A divalent metal cation contacts are provided by Asp-197, Asp-208, and His-271. Position 278 (His-278) interacts with substrate. The a divalent metal cation site is built by Glu-303 and Glu-334.

Belongs to the peptidase M24A family. Methionine aminopeptidase type 1 subfamily. Co(2+) serves as cofactor. The cofactor is Zn(2+). Requires Mn(2+) as cofactor. Fe(2+) is required as a cofactor. As to expression, ubiquitous. Preferentially expressed in green tissues.

It localises to the plastid. The protein localises to the chloroplast. Its subcellular location is the mitochondrion. It catalyses the reaction Release of N-terminal amino acids, preferentially methionine, from peptides and arylamides.. Functionally, removes the N-terminal methionine from nascent proteins. The N-terminal methionine is often cleaved when the second residue in the primary sequence is small and uncharged (Met-Ala-, Cys, Gly, Pro, Ser, Thr, or Val). This chain is Methionine aminopeptidase 1D, chloroplastic/mitochondrial (MAP1D), found in Arabidopsis thaliana (Mouse-ear cress).